The sequence spans 59 residues: Antitoxin Rv0909 (59 aa).

Functionally, antitoxin component of a type II toxin-antitoxin (TA) system. Upon expression in M.smegmatis neutralizes the effect of cognate toxin Rv0910. This chain is Antitoxin Rv0909, found in Mycobacterium tuberculosis (strain ATCC 25618 / H37Rv).